A 171-amino-acid polypeptide reads, in one-letter code: MEKLPRKRVSKTKSQKLINSLTTQKNRALLKKISSNEMLLELEKGAFKKNEAYFISDEEDKNYVLVPDNVISLLAENARKAFEARLKAELERDIIIQAPIDFEDVREVSLQLLENLRQKDGNLPNINTLNFVKQIKKEHPNLFFNFDNMFKQPPFNENNFENFDSNDEENF.

This sequence belongs to the UPF0763 family.

The protein is UPF0763 protein Hac_0849 of Helicobacter acinonychis (strain Sheeba).